A 370-amino-acid polypeptide reads, in one-letter code: Actin-related protein 2/3 complex subunit 1A-A (370 aa).

WD repeat units lie at residues phenylalanine 6–glycine 45, glutamate 50–threonine 89, proline 140–lysine 179, serine 202–glutamine 241, threonine 244–serine 284, and leucine 322–glutamine 365.

This sequence belongs to the WD repeat ARPC1 family. Component of the Arp2/3 complex.

It localises to the cytoplasm. Its subcellular location is the cytoskeleton. The protein resides in the nucleus. Functionally, probably functions as a component of the Arp2/3 complex which is involved in regulation of actin polymerization and together with an activating nucleation-promoting factor (NPF) mediates the formation of branched actin networks. In addition to its role in the cytoplasmic cytoskeleton, the Arp2/3 complex also promotes actin polymerization in the nucleus, thereby regulating gene transcription and repair of damaged DNA. In Xenopus laevis (African clawed frog), this protein is Actin-related protein 2/3 complex subunit 1A-A (arpc1a-a).